A 142-amino-acid chain; its full sequence is Peptide methionine sulfoxide reductase MsrB (142 aa).

Residues 2 to 125 enclose the MsrB domain; the sequence is IKKDKNELNE…NSAAIQFIPY (124 aa). C114 functions as the Nucleophile in the catalytic mechanism.

Belongs to the MsrB Met sulfoxide reductase family.

The enzyme catalyses L-methionyl-[protein] + [thioredoxin]-disulfide + H2O = L-methionyl-(R)-S-oxide-[protein] + [thioredoxin]-dithiol. In Staphylococcus haemolyticus (strain JCSC1435), this protein is Peptide methionine sulfoxide reductase MsrB.